The chain runs to 294 residues: 4-hydroxy-tetrahydrodipicolinate synthase (294 aa).

T44 lines the pyruvate pocket. The Proton donor/acceptor role is filled by Y132. Residue K161 is the Schiff-base intermediate with substrate of the active site. Residue I206 coordinates pyruvate.

It belongs to the DapA family. As to quaternary structure, homotetramer; dimer of dimers.

It is found in the cytoplasm. It carries out the reaction L-aspartate 4-semialdehyde + pyruvate = (2S,4S)-4-hydroxy-2,3,4,5-tetrahydrodipicolinate + H2O + H(+). Its pathway is amino-acid biosynthesis; L-lysine biosynthesis via DAP pathway; (S)-tetrahydrodipicolinate from L-aspartate: step 3/4. Catalyzes the condensation of (S)-aspartate-beta-semialdehyde [(S)-ASA] and pyruvate to 4-hydroxy-tetrahydrodipicolinate (HTPA). The polypeptide is 4-hydroxy-tetrahydrodipicolinate synthase (Thermotoga petrophila (strain ATCC BAA-488 / DSM 13995 / JCM 10881 / RKU-1)).